A 165-amino-acid polypeptide reads, in one-letter code: MATKIRLQRHGRKGYAFYHIVIADSRAPRNGNFIERIGFYNPNTNPATINLKFERALYWLNVGAQPTDTARNILSCEGIFLKKHLLEGINKGVLSEADAKSKFEAWKNVKRIAIQNEINKIYEQQRIVNKAKLESERVVNQTKTKVLAQKEKLLKEENNTPLPSE.

The protein belongs to the bacterial ribosomal protein bS16 family.

The chain is Small ribosomal subunit protein bS16 from Azobacteroides pseudotrichonymphae genomovar. CFP2.